The following is a 221-amino-acid chain: MLEDKAVVVFSGGQDSTTCLFWAKERYRSLHAVIFDYGQRHKEEIQCAVDIANEQGVPYKVFDMGLLNQLTANALTRENISVQAGEAGESPSTFVAGRNHLFLSFAAVYAREMGAKHIITGVCETDFSGYPDCRDVFVKSLNVTLNLAMDEQFVIHTPLMWLNKKETWALADKMGQLEYIRAKTLTCYEGIRGDGCGTCPSCQLRQNGLDLYLREKAGAGQ.

ATP is bound at residue 10 to 20; that stretch reads FSGGQDSTTCL. Zn(2+) is bound by residues Cys-187, Cys-196, Cys-199, and Cys-202.

The protein belongs to the QueC family. As to quaternary structure, homodimer. The cofactor is Zn(2+).

The catalysed reaction is 7-carboxy-7-deazaguanine + NH4(+) + ATP = 7-cyano-7-deazaguanine + ADP + phosphate + H2O + H(+). The protein operates within purine metabolism; 7-cyano-7-deazaguanine biosynthesis. In terms of biological role, catalyzes the ATP-dependent conversion of 7-carboxy-7-deazaguanine (CDG) to 7-cyano-7-deazaguanine (preQ(0)). This Shouchella clausii (strain KSM-K16) (Alkalihalobacillus clausii) protein is 7-cyano-7-deazaguanine synthase.